A 232-amino-acid chain; its full sequence is 6-hydroxymethyl-7,8-dihydropterin pyrophosphokinase (232 aa).

It belongs to the archaeal 6-HMPDK family. Mg(2+) serves as cofactor.

The catalysed reaction is 6-hydroxymethyl-7,8-dihydropterin + ATP = (7,8-dihydropterin-6-yl)methyl diphosphate + AMP + H(+). It participates in cofactor biosynthesis; 5,6,7,8-tetrahydromethanopterin biosynthesis. Its function is as follows. Catalyzes the transfer of diphosphate from ATP to 6-hydroxymethyl-7,8-dihydropterin (6-HMD), leading to 6-hydroxymethyl-7,8-dihydropterin diphosphate (6-HMDP). The protein is 6-hydroxymethyl-7,8-dihydropterin pyrophosphokinase of Methanothermobacter thermautotrophicus (strain ATCC 29096 / DSM 1053 / JCM 10044 / NBRC 100330 / Delta H) (Methanobacterium thermoautotrophicum).